A 4074-amino-acid polypeptide reads, in one-letter code: Fibrocystin (4074 aa).

Positions 1 to 22 (MIVWLISLMSIEILLLAGPALS) are cleaved as a signal peptide. Asparagine 54 and asparagine 224 each carry an N-linked (GlcNAc...) asparagine glycan. Positions 258–310 (EILSVFPETGSLGGKTDIIITGDFFDNPALVTIAGVPCDIRHMSPRKIECTTR) constitute an IPT/TIG 1 domain. Residues 323 to 483 (AGNRGLLFEV…TWLNPDVVST (161 aa)) form the PA14 domain. 46 N-linked (GlcNAc...) asparagine glycosylation sites follow: asparagine 355, asparagine 385, asparagine 518, asparagine 527, asparagine 640, asparagine 710, asparagine 741, asparagine 822, asparagine 829, asparagine 868, asparagine 953, asparagine 966, asparagine 976, asparagine 1006, asparagine 1059, asparagine 1083, asparagine 1115, asparagine 1134, asparagine 1233, asparagine 1240, asparagine 1274, asparagine 1284, asparagine 1308, asparagine 1319, asparagine 1342, asparagine 1373, asparagine 1445, asparagine 1456, asparagine 1471, asparagine 1490, asparagine 1528, asparagine 1560, asparagine 1578, asparagine 1598, asparagine 1627, asparagine 1694, asparagine 1760, asparagine 1775, asparagine 1789, asparagine 1875, asparagine 1915, asparagine 1941, asparagine 1955, asparagine 2030, asparagine 2111, and asparagine 2140. In terms of domain architecture, IPT/TIG 2 spans 944 to 1000 (SLLIYIFGINFSGDPQALEIMVNKTNCKVIFSNQTNVICQTDLLPVGMHRLFMVVRP). 3 consecutive IPT/TIG domains span residues 1018–1101 (PRLD…AFTY), 1107–1186 (PVIT…RSPG), and 1199–1274 (SIEP…WAGN). The IPT/TIG 6 domain occupies 1385–1464 (PWIMAISPTH…LNVTVIVNGL (80 aa)). The IPT/TIG 7 domain maps to 1573 to 1641 (HYFPKNFSIH…LVIEVDGLSY (69 aa)). The 122-residue stretch at 1928-2049 (HSWFPERVPQ…PEVTFTHLQA (122 aa)) folds into the G8 1 domain. 5 PbH1 repeats span residues 2245–2267 (TLGL…LVGT), 2288–2322 (EQGN…YILN), 2351–2373 (APLL…FIYP), 2383–2404 (RGPT…RISR), and 2405–2427 (SSNL…DILE). A glycan (N-linked (GlcNAc...) asparagine) is linked at asparagine 2390. N-linked (GlcNAc...) asparagine glycosylation is found at asparagine 2431, asparagine 2467, asparagine 2531, asparagine 2549, asparagine 2579, asparagine 2591, asparagine 2749, asparagine 2764, asparagine 2972, and asparagine 3004. One copy of the PbH1 6 repeat lies at 2460–2483 (RWELIISNTTFVNFDLTDCVSIRT). The G8 2 domain occupies 2743–2869 (EGWGGHNHTI…PKKSWTRLAA (127 aa)). One copy of the PbH1 7 repeat lies at 3029–3051 (SHGIILNDNIVFGTVGHGIDLEG). Residue asparagine 3053 is glycosylated (N-linked (GlcNAc...) asparagine). The stretch at 3082 to 3104 (AKDINLYGNVVAGSERIGFHIQG) is one PbH1 8 repeat. Residues asparagine 3136, asparagine 3165, asparagine 3221, asparagine 3484, asparagine 3702, asparagine 3721, and asparagine 3833 are each glycosylated (N-linked (GlcNAc...) asparagine). One copy of the PbH1 9 repeat lies at 3158–3183 (ENSVEIENITLVDNSIGLLATVYVSS). A helical membrane pass occupies residues 3854–3874 (IILAVSLCSVASWLALCCLVC). Residues 3871 to 3888 (CLVCCWFRKSKSRKIKSE) form a ciliary targeting sequence (CST) region. 3 disordered regions span residues 3896-3919 (NDQK…KEDT), 3943-3965 (NGVS…REED), and 4031-4074 (LQGQ…QEQL). Basic and acidic residues-rich tracts occupy residues 3910–3919 (RSQETKKEDT) and 3954–3965 (AVREEGSSREED). Positions 3947–3976 (RRKVSRRAVREEGSSREEDVVPAPRIISIT) are nuclear localization signal (NLS).

As to quaternary structure, interacts with CAMLG. Interacts with PKD2. Interacts (via CST) with ARF4; this interaction allows an efficient PKHD1 trafficking to the cilium. Interacts (via CST) with RAB8A; this interaction controls trafficking through the endomembrane systeme and to the cilium. Interacts (via CST) with TULP3; this interaction allows PKHD1 trafficking to the cilium. Post-translationally, palmitoylated. Palmitoylation facilitates the trafficking to the cilia and membrane targeting. In terms of processing, N-glycosylated. Several proteolytic cleavages occur within the extracellular domain, whereas at least one cleavage occurs within the cytoplasmic domain. Cleaved by a probable proprotein convertase which produces an extracellular domain (polyductin extracellular domain, (PECD)) and a C-terminal fragment (polyductin transmembrane fragment (PTM)) which are tethered together by disulfide bonds. This extracellular domain (PECD) is then shed from the primary cilium by activation of a member of the ADAM metalloproteinase disintegrins family, resulting in concomitant release of an intra-cellular C-terminal fragment (ICD) via a gamma-secretase-dependent process. The proteolytic cleavage of the C-terminal intracellular fragment (ICD) is controlled by cytosolic calcium concentration and activation of PKC.

It is found in the cell membrane. It localises to the cytoplasm. The protein localises to the apical cell membrane. Its subcellular location is the cytoskeleton. The protein resides in the cilium basal body. It is found in the cell projection. It localises to the cilium. The protein localises to the spindle. Its subcellular location is the chromosome. The protein resides in the centromere. It is found in the nucleus. It localises to the secreted. The protein localises to the extracellular exosome. Its subcellular location is the endoplasmic reticulum. The protein resides in the golgi apparatus. Its function is as follows. Promotes ciliogenesis in renal epithelial cells and therefore participates in the tubules formation and/ or ensures the maintenance of the architecture of the lumen of the kidney. Has an impact on cellular symmetry by ensuring correct bipolar cell division through the regulation of centrosome duplication and mitotic spindle assembly and by maintaining oriented cell division (OCD) during tubular elongation through planar cell polarity (PCP) pathway. During epithelial cell morphogenesis, it also regulates cell-cell and cell-matrix adhesion and participates in cell motility. Promotes cell-cell contact through the positive regulation of PTK2 kinase activity leading to either positive regulation of epithelial cell proliferation through the HRAS/RAF1 pathways, or negative regulation of apoptosis through the PDK1/AKT1 pathway. May act in collecting-duct and biliary differentiation. May participate in the regulation of the cholangiocytes proliferation and the CCN2 production in an CXCL8-dependent manner. The protein is Fibrocystin of Canis lupus familiaris (Dog).